Here is a 569-residue protein sequence, read N- to C-terminus: Sulfite reductase [NADPH] hemoprotein beta-component (569 aa).

Residues cysteine 433, cysteine 439, cysteine 478, and cysteine 482 each contribute to the [4Fe-4S] cluster site. Residue cysteine 482 coordinates siroheme.

It belongs to the nitrite and sulfite reductase 4Fe-4S domain family. In terms of assembly, alpha(8)-beta(8). The alpha component is a flavoprotein, the beta component is a hemoprotein. Siroheme serves as cofactor. The cofactor is [4Fe-4S] cluster.

The enzyme catalyses hydrogen sulfide + 3 NADP(+) + 3 H2O = sulfite + 3 NADPH + 4 H(+). It participates in sulfur metabolism; hydrogen sulfide biosynthesis; hydrogen sulfide from sulfite (NADPH route): step 1/1. Functionally, component of the sulfite reductase complex that catalyzes the 6-electron reduction of sulfite to sulfide. This is one of several activities required for the biosynthesis of L-cysteine from sulfate. The chain is Sulfite reductase [NADPH] hemoprotein beta-component from Buchnera aphidicola subsp. Acyrthosiphon pisum (strain Tuc7).